A 95-amino-acid polypeptide reads, in one-letter code: Large ribosomal subunit protein uL23 (95 aa).

The protein belongs to the universal ribosomal protein uL23 family. In terms of assembly, part of the 50S ribosomal subunit. Contacts protein L29, and trigger factor when it is bound to the ribosome.

Its function is as follows. One of the early assembly proteins it binds 23S rRNA. One of the proteins that surrounds the polypeptide exit tunnel on the outside of the ribosome. Forms the main docking site for trigger factor binding to the ribosome. The chain is Large ribosomal subunit protein uL23 from Desulforapulum autotrophicum (strain ATCC 43914 / DSM 3382 / VKM B-1955 / HRM2) (Desulfobacterium autotrophicum).